The following is a 278-amino-acid chain: tRNA pseudouridine synthase A (278 aa).

Residue aspartate 51 is the Nucleophile of the active site. Residue tyrosine 109 coordinates substrate.

This sequence belongs to the tRNA pseudouridine synthase TruA family. In terms of assembly, homodimer.

The enzyme catalyses uridine(38/39/40) in tRNA = pseudouridine(38/39/40) in tRNA. In terms of biological role, formation of pseudouridine at positions 38, 39 and 40 in the anticodon stem and loop of transfer RNAs. The polypeptide is tRNA pseudouridine synthase A (Paracidovorax citrulli (strain AAC00-1) (Acidovorax citrulli)).